The chain runs to 320 residues: GTP 3',8-cyclase (320 aa).

In terms of domain architecture, Radical SAM core spans Leu4–Lys227. Arg13 lines the GTP pocket. [4Fe-4S] cluster-binding residues include Cys20 and Cys24. Tyr26 contacts S-adenosyl-L-methionine. Residue Cys27 participates in [4Fe-4S] cluster binding. Residue Arg63 participates in GTP binding. Gly67 contacts S-adenosyl-L-methionine. Position 94 (Thr94) interacts with GTP. Residue Ser118 participates in S-adenosyl-L-methionine binding. Residue Lys155 coordinates GTP. Met189 is a binding site for S-adenosyl-L-methionine. Cys249 and Cys252 together coordinate [4Fe-4S] cluster. Residue Arg254 to Arg256 coordinates GTP. Cys266 provides a ligand contact to [4Fe-4S] cluster. Over residues Lys300–Asn312 the composition is skewed to basic and acidic residues. Positions Lys300 to Gly320 are disordered.

The protein belongs to the radical SAM superfamily. MoaA family. Monomer and homodimer. Requires [4Fe-4S] cluster as cofactor.

It carries out the reaction GTP + AH2 + S-adenosyl-L-methionine = (8S)-3',8-cyclo-7,8-dihydroguanosine 5'-triphosphate + 5'-deoxyadenosine + L-methionine + A + H(+). The protein operates within cofactor biosynthesis; molybdopterin biosynthesis. In terms of biological role, catalyzes the cyclization of GTP to (8S)-3',8-cyclo-7,8-dihydroguanosine 5'-triphosphate. The sequence is that of GTP 3',8-cyclase from Alkaliphilus oremlandii (strain OhILAs) (Clostridium oremlandii (strain OhILAs)).